The sequence spans 135 residues: MGFLTAVTQGLVRGADRMSKWTSKRGPRTFTKSRGAKKTGIYTSDRKFVQIKEMVPEFVVPDLTGFKLKPYVNYRAPAGIDTPLTAKALFQETVAPAIEKDFKEGTFDANNLEKYGFEPTQEGKLFQLYPKNFPR.

The transit peptide at 1–13 (MGFLTAVTQGLVR) directs the protein to the mitochondrion.

This sequence belongs to the mitochondrion-specific ribosomal protein mL41 family. In terms of assembly, component of the mitochondrial ribosome large subunit (39S) which comprises a 16S rRNA and about 50 distinct proteins. Interacts with BCL2.

The protein resides in the mitochondrion. Its function is as follows. Component of the mitochondrial ribosome large subunit. Also involved in apoptosis and cell cycle. Enhances p53/TP53 stability, thereby contributing to p53/TP53-induced apoptosis in response to growth-inhibitory condition. Enhances p53/TP53 translocation to the mitochondria. Has the ability to arrest the cell cycle at the G1 phase, possibly by stabilizing the CDKN1A and CDKN1B (p27Kip1) proteins. The protein is Large ribosomal subunit protein mL41 (Mrpl41) of Mus musculus (Mouse).